The primary structure comprises 524 residues: Keratin, type II cytoskeletal 71 (524 aa).

Residues 1 to 130 (MSRQFTCKSG…DPEIQKVRAQ (130 aa)) form a head region. Positions 131–166 (EREQIKALNNKFASFIDKVRFLEQQNQVLQTKWELL) are coil 1A. Positions 131-444 (EREQIKALNN…KLLESEECRM (314 aa)) constitute an IF rod domain. Residues 167-185 (QQLDLNNCKNNLEPILEGH) form a linker 1 region. The interval 186–277 (ISNMRKQLET…CLFEAEMAQI (92 aa)) is coil 1B. Residues 278 to 301 (QSHISDMSVILSMDNNRNLDLDSI) are linker 12. The coil 2 stretch occupies residues 302–440 (IDEVRAQYEE…ATYRKLLESE (139 aa)). Residues 441 to 524 (ECRMSGEYSS…LSTPSKKGGR (84 aa)) are tail. Residues 493-524 (GGENRSRGSASDYKDTLTKGSSLSTPSKKGGR) are disordered. Basic and acidic residues predominate over residues 494–509 (GENRSRGSASDYKDTL). Over residues 510 to 524 (TKGSSLSTPSKKGGR) the composition is skewed to polar residues.

The protein belongs to the intermediate filament family. Heterodimer of a type I and a type II keratin. Associates with KRT16 and/or KRT17. Specifically expressed in the inner root sheath (IRS) of the hair follicle. Present in Henle and the Huxley layers of the IRS, while expression in the cuticle is unsure (at protein level).

The protein localises to the cytoplasm. It localises to the cytoskeleton. Functionally, plays a central role in hair formation. Essential component of keratin intermediate filaments in the inner root sheath (IRS) of the hair follicle. This Mus musculus (Mouse) protein is Keratin, type II cytoskeletal 71 (Krt71).